Consider the following 343-residue polypeptide: F17e-G fimbrial adhesin (343 aa).

Positions Met1–Ala22 are cleaved as a signal peptide. Positions Ala23 to Val199 are receptor-binding lectin domain. Residues Ala65–Asn66, Asp110–Thr111, and Ser138–Gly141 each bind a carbohydrate. Cys75 and Cys132 form a disulfide bridge. Positions Thr200–Gln343 are fimbrillin-binding domain. The segment at Leu287 to Gly307 is disordered. The span at Asn298–Gly307 shows a compositional bias: polar residues.

This sequence belongs to the fimbrial protein family.

Its subcellular location is the fimbrium. In terms of biological role, essential fimbrial adhesion factor that mediates binding to N-acetylglucosamine-containing receptors in the host intestinal microvilli, leading to colonization of the intestinal tissue, and diarrhea or septicemia. Also confers adhesiveness to laminin and basement membranes. The chain is F17e-G fimbrial adhesin (f17eG) from Escherichia coli.